We begin with the raw amino-acid sequence, 806 residues long: DEP domain-containing protein 1A (806 aa).

A DEP domain is found at 24–108; sequence FRAAMPLRKH…DNNSLYRFPS (85 aa). Positions 142 to 177 are disordered; the sequence is QFSKKTPKRRASVDSKEEQENEDLMEDQRNDDDFPK. The span at 167 to 177 shows a compositional bias: basic and acidic residues; the sequence is EDQRNDDDFPK. A Rho-GAP domain is found at 279–319; that stretch reads DYFLNLPEPLLTFEFYELFVNILVVCGYITVPNSHNGKHRF. The interval 564-588 is disordered; the sequence is SHSSFPSTSSLLPPTTSPNSTGSES.

The protein is DEP domain-containing protein 1A (depdc1a) of Xenopus laevis (African clawed frog).